The chain runs to 236 residues: Ureidoacrylate amidohydrolase RutB (236 aa).

Asp-24 functions as the Proton acceptor in the catalytic mechanism. The active site involves Lys-133. Cys-166 acts as the Nucleophile in catalysis.

Belongs to the isochorismatase family. RutB subfamily.

The enzyme catalyses (Z)-3-ureidoacrylate + H2O + H(+) = (Z)-3-aminoacrylate + NH4(+) + CO2. It catalyses the reaction (Z)-3-ureidoacrylate + H2O = (Z)-3-aminoacrylate + carbamate + H(+). The catalysed reaction is (Z)-2-methylureidoacrylate + H2O + H(+) = (Z)-2-methylaminoacrylate + NH4(+) + CO2. Its function is as follows. Hydrolyzes ureidoacrylate to form aminoacrylate and carbamate. The carbamate hydrolyzes spontaneously, thereby releasing one of the nitrogen atoms of the pyrimidine ring as ammonia and one of its carbon atoms as CO2. The chain is Ureidoacrylate amidohydrolase RutB from Klebsiella variicola (strain At-22).